Consider the following 377-residue polypeptide: RIB43A-like with coiled-coils protein 2 (377 aa).

Residues 217 to 246 (NKNQVVELTERKRQEKQQEQEDNMTEITNL) are a coiled coil. Residues 354–377 (KQMNTASSSQPTEDYFSQFNTRSR) are disordered.

It belongs to the RIB43A family. Microtubule inner protein component of sperm flagellar doublet microtubules.

The protein localises to the cytoplasm. It localises to the cytoskeleton. Its subcellular location is the cilium axoneme. It is found in the flagellum axoneme. Functionally, microtubule inner protein (MIP) part of the dynein-decorated doublet microtubules (DMTs) in cilia axoneme, which is required for motile cilia beating. This Mus musculus (Mouse) protein is RIB43A-like with coiled-coils protein 2.